Consider the following 74-residue polypeptide: MKLTCVLIIAVLFLTAYQLATAASYAKGKQKHRALRPADKHLRLTKRCNDRGGGCSQHPHCCGGTCNKLIGVCL.

The first 22 residues, 1–22 (MKLTCVLIIAVLFLTAYQLATA), serve as a signal peptide directing secretion. The propeptide occupies 23–45 (ASYAKGKQKHRALRPADKHLRLT). 3 disulfides stabilise this stretch: Cys48–Cys62, Cys55–Cys66, and Cys61–Cys73.

The protein belongs to the conotoxin O1 superfamily. In terms of tissue distribution, expressed by the venom duct.

Its subcellular location is the secreted. In Conus miles (Soldier cone), this protein is Conotoxin MiEr93.